Consider the following 347-residue polypeptide: Putative adhesin P1-like protein MPN_099 (347 aa).

Residues 282–300 (FGTDHSTQPQPQSLKTTTP) show a composition bias toward polar residues. Residues 282–302 (FGTDHSTQPQPQSLKTTTPVF) form a disordered region.

It belongs to the adhesin P1 family.

This is Putative adhesin P1-like protein MPN_099 from Mycoplasma pneumoniae (strain ATCC 29342 / M129 / Subtype 1) (Mycoplasmoides pneumoniae).